The sequence spans 392 residues: MTSASASLERFAANKLAGLDRRNLRRRTRETRPLGGALVERDGRQLVNACSNDYLGLSQHPAVIEAAAAAARQFGAGSGASRLVTGGHPLLFELEARLAAFKGTEDCLVFGSGYLANLAITPALVGSGDIIFVDTLAHACLHAGARLSGARVEVFPHNDMAALEAMLKTLRPVHRHAMILTDGVFSMDGDLAPLPDMMALAQTHDAWTLIDDAHGIGVIGGGHGSTHAFQPSVVPPLQMGTLSKALGSYGGYVCASRDVCDLLRTRARPLVFTTALPPASIGAALAALDLIEQDSALRERPMDLARRFCRTLGLAEPNSPIVPIIIGDESAALSASAELEDAGFLVTAIRPPTVPRRTARLRITFNAAHSEADIDRLATTLKSILQTAEAAE.

A substrate-binding site is contributed by Arg26. 113-114 is a binding site for pyridoxal 5'-phosphate; the sequence is GY. His138 contacts substrate. Pyridoxal 5'-phosphate contacts are provided by Ser186, His214, and Thr241. Lys244 carries the N6-(pyridoxal phosphate)lysine modification. Thr353 contributes to the substrate binding site.

Belongs to the class-II pyridoxal-phosphate-dependent aminotransferase family. BioF subfamily. Homodimer. The cofactor is pyridoxal 5'-phosphate.

It carries out the reaction 6-carboxyhexanoyl-[ACP] + L-alanine + H(+) = (8S)-8-amino-7-oxononanoate + holo-[ACP] + CO2. It participates in cofactor biosynthesis; biotin biosynthesis. In terms of biological role, catalyzes the decarboxylative condensation of pimeloyl-[acyl-carrier protein] and L-alanine to produce 8-amino-7-oxononanoate (AON), [acyl-carrier protein], and carbon dioxide. The sequence is that of 8-amino-7-oxononanoate synthase from Maricaulis maris (strain MCS10) (Caulobacter maris).